The sequence spans 249 residues: Probable transcriptional regulatory protein IL1088 (249 aa).

The protein belongs to the TACO1 family.

The protein localises to the cytoplasm. This chain is Probable transcriptional regulatory protein IL1088, found in Idiomarina loihiensis (strain ATCC BAA-735 / DSM 15497 / L2-TR).